The chain runs to 655 residues: Acetyl-coenzyme A synthetase (655 aa).

CoA is bound by residues 196–199 and Thr316; that span reads RGGK. ATP contacts are provided by residues 392 to 394, 416 to 421, Asp507, and Arg522; these read GEP and DTWWQT. Ser530 contributes to the CoA binding site. Position 533 (Arg533) interacts with ATP. 2 residues coordinate Mg(2+): Val544 and Val549. Lys619 carries the N6-acetyllysine modification.

The protein belongs to the ATP-dependent AMP-binding enzyme family. The cofactor is Mg(2+). In terms of processing, acetylated. Deacetylation by the SIR2-homolog deacetylase activates the enzyme.

It carries out the reaction acetate + ATP + CoA = acetyl-CoA + AMP + diphosphate. Catalyzes the conversion of acetate into acetyl-CoA (AcCoA), an essential intermediate at the junction of anabolic and catabolic pathways. AcsA undergoes a two-step reaction. In the first half reaction, AcsA combines acetate with ATP to form acetyl-adenylate (AcAMP) intermediate. In the second half reaction, it can then transfer the acetyl group from AcAMP to the sulfhydryl group of CoA, forming the product AcCoA. This chain is Acetyl-coenzyme A synthetase, found in Thiobacillus denitrificans (strain ATCC 25259 / T1).